Here is a 141-residue protein sequence, read N- to C-terminus: Large ribosomal subunit protein uL11 (141 aa).

The protein belongs to the universal ribosomal protein uL11 family. In terms of assembly, part of the ribosomal stalk of the 50S ribosomal subunit. Interacts with L10 and the large rRNA to form the base of the stalk. L10 forms an elongated spine to which L12 dimers bind in a sequential fashion forming a multimeric L10(L12)X complex. One or more lysine residues are methylated.

Functionally, forms part of the ribosomal stalk which helps the ribosome interact with GTP-bound translation factors. In Synechococcus sp. (strain ATCC 27144 / PCC 6301 / SAUG 1402/1) (Anacystis nidulans), this protein is Large ribosomal subunit protein uL11.